The primary structure comprises 337 residues: Tetraacyldisaccharide 4'-kinase (337 aa).

56–63 is an ATP binding site; the sequence is VAGGAGKT.

Belongs to the LpxK family.

It catalyses the reaction a lipid A disaccharide + ATP = a lipid IVA + ADP + H(+). The protein operates within glycolipid biosynthesis; lipid IV(A) biosynthesis; lipid IV(A) from (3R)-3-hydroxytetradecanoyl-[acyl-carrier-protein] and UDP-N-acetyl-alpha-D-glucosamine: step 6/6. Its function is as follows. Transfers the gamma-phosphate of ATP to the 4'-position of a tetraacyldisaccharide 1-phosphate intermediate (termed DS-1-P) to form tetraacyldisaccharide 1,4'-bis-phosphate (lipid IVA). In Rhodospirillum centenum (strain ATCC 51521 / SW), this protein is Tetraacyldisaccharide 4'-kinase.